Reading from the N-terminus, the 332-residue chain is 4-hydroxyproline 2-epimerase 2 (332 aa).

The active-site Proton acceptor is the cysteine 89. Substrate is bound by residues histidine 222, aspartate 248, and 253–254 (GT).

The protein belongs to the proline racemase family.

It catalyses the reaction trans-4-hydroxy-L-proline = cis-4-hydroxy-D-proline. In terms of biological role, catalyzes the epimerization of trans-4-hydroxy-L-proline (t4LHyp) to cis-4-hydroxy-D-proline (c4DHyp). Is likely involved in a degradation pathway that converts t4LHyp to alpha-ketoglutarate. Displays no proline racemase activity. This Rhizobium rhizogenes (strain K84 / ATCC BAA-868) (Agrobacterium radiobacter) protein is 4-hydroxyproline 2-epimerase 2.